Reading from the N-terminus, the 800-residue chain is Mitochondrial intermediate peptidase (800 aa).

A mitochondrion-targeting transit peptide spans 1-23 (MAGHMLMPLRRRPWTCRACLQRL). Over residues 27 to 41 (RRSLETAASPSSQSD) the composition is skewed to polar residues. The segment at 27 to 59 (RRSLETAASPSSQSDVYDYAPTNHSTQKKSNDE) is disordered. His563 serves as a coordination point for Zn(2+). Glu564 is an active-site residue. His567 and His570 together coordinate Zn(2+).

This sequence belongs to the peptidase M3 family. Zn(2+) serves as cofactor.

It is found in the mitochondrion matrix. The catalysed reaction is Release of an N-terminal octapeptide as second stage of processing of some proteins imported into the mitochondrion.. Its function is as follows. Cleaves proteins, imported into the mitochondrion, to their mature size. While most mitochondrial precursor proteins are processed to the mature form in one step by mitochondrial processing peptidase (MPP), the sequential cleavage by MIP of an octapeptide after initial processing by MPP is a required step for a subgroup of nuclear-encoded precursor proteins destined for the matrix or the inner membrane. In Aspergillus oryzae (strain ATCC 42149 / RIB 40) (Yellow koji mold), this protein is Mitochondrial intermediate peptidase (oct1).